Consider the following 203-residue polypeptide: Urease accessory protein UreG (203 aa).

G14–T21 provides a ligand contact to GTP.

It belongs to the SIMIBI class G3E GTPase family. UreG subfamily. Homodimer. UreD, UreF and UreG form a complex that acts as a GTP-hydrolysis-dependent molecular chaperone, activating the urease apoprotein by helping to assemble the nickel containing metallocenter of UreC. The UreE protein probably delivers the nickel.

Its subcellular location is the cytoplasm. Functionally, facilitates the functional incorporation of the urease nickel metallocenter. This process requires GTP hydrolysis, probably effectuated by UreG. This Allorhizobium ampelinum (strain ATCC BAA-846 / DSM 112012 / S4) (Agrobacterium vitis (strain S4)) protein is Urease accessory protein UreG.